The primary structure comprises 441 residues: MSKVTPQPKIGFVSLGCPKNLVDSERILTELRTEGYDVVPSYDDADMVIVNTCGFIDSAVQESLEAIGEALNENGKVIVTGCLGAKEDQIREVHPKVLEITGPHSYEQVLEHVHHYVPKPKHNPFLSLVPEQGVKLTPRHYAYLKISEGCNHRCTFCIIPSMRGDLVSRPIGEVLSEAKRLVDAGVKEILVISQDTSAYGVDVKHRTGFHNGEPVKTSMVSLCEQLSKLGIWTRLHYVYPYPHVDDVIPLMAEGKILPYLDIPLQHASPRILKLMKRPGSVDRQLARIKQWRKICPELTLRSTFIVGFPGETEEDFQMLLDFLKEARLDRVGCFKYSPVEGADANALPDQVPEEVKEERWNRFMQLQQQISAERLQEKVGREILVIIDEVDEEGAIGRSMADAPEIDGAVYLNGETNVKPGDILRVKVEHADEYDLWGSRV.

In terms of domain architecture, MTTase N-terminal spans P8–P118. 6 residues coordinate [4Fe-4S] cluster: C17, C53, C82, C150, C154, and C157. The region spanning L136 to E373 is the Radical SAM core domain. Positions Q376–V441 constitute a TRAM domain.

The protein belongs to the methylthiotransferase family. RimO subfamily. It depends on [4Fe-4S] cluster as a cofactor.

The protein resides in the cytoplasm. It catalyses the reaction L-aspartate(89)-[ribosomal protein uS12]-hydrogen + (sulfur carrier)-SH + AH2 + 2 S-adenosyl-L-methionine = 3-methylsulfanyl-L-aspartate(89)-[ribosomal protein uS12]-hydrogen + (sulfur carrier)-H + 5'-deoxyadenosine + L-methionine + A + S-adenosyl-L-homocysteine + 2 H(+). Its function is as follows. Catalyzes the methylthiolation of an aspartic acid residue of ribosomal protein uS12. This is Ribosomal protein uS12 methylthiotransferase RimO from Escherichia coli (strain UTI89 / UPEC).